A 466-amino-acid polypeptide reads, in one-letter code: Cytochrome b561 and DOMON domain-containing protein At3g59070 (466 aa).

The N-terminal stretch at 1 to 25 (MSLSSRATLVVLCCLFMLIPSFTTA) is a signal peptide. One can recognise a DOMON domain in the interval 57-172 (LNSYLHFNYA…TVVNHLWQDG (116 aa)). The 202-residue stretch at 179 to 380 (RLGMHAMSGD…MEILQFKKRW (202 aa)) folds into the Cytochrome b561 domain. 3 helical membrane-spanning segments follow: residues 219–239 (IHAI…VMAA), 252–272 (WFYI…IGGL), and 287–307 (TLHT…ILSL). Heme b-binding residues include H220, H256, H289, and H325. 2 helical membrane-spanning segments follow: residues 327–347 (TMGY…LSIL) and 355–375 (IAYT…EILQ).

Heme b serves as cofactor.

The protein localises to the membrane. May act as a catecholamine-responsive trans-membrane electron transporter. The polypeptide is Cytochrome b561 and DOMON domain-containing protein At3g59070 (Arabidopsis thaliana (Mouse-ear cress)).